We begin with the raw amino-acid sequence, 275 residues long: Vitamin B12-binding protein (275 aa).

Residues 1 to 27 (MKWIKSTGSIGLSLLLFLSSFSHSLYA) form the signal peptide. The 245-residue stretch at 31-275 (RVISLSPSTT…LCQQLNDNGS (245 aa)) folds into the Fe/B12 periplasmic-binding domain. Y58 provides a ligand contact to cyanocob(III)alamin. A disulfide bond links C191 and C267.

The protein belongs to the BtuF family. The complex is composed of two ATP-binding proteins (BtuD), two transmembrane proteins (BtuC) and a solute-binding protein (BtuF).

The protein resides in the periplasm. In terms of biological role, part of the ABC transporter complex BtuCDF involved in vitamin B12 import. Binds vitamin B12 and delivers it to the periplasmic surface of BtuC. The protein is Vitamin B12-binding protein of Photorhabdus laumondii subsp. laumondii (strain DSM 15139 / CIP 105565 / TT01) (Photorhabdus luminescens subsp. laumondii).